The sequence spans 147 residues: Plasminogen receptor (KT) (147 aa).

The Extracellular segment spans residues 1 to 52 (MGFIFSKSMNESMKNQKEFMLMNARLQLERQLIMQSEMRERQMAMQIAWSRE). A helical transmembrane segment spans residues 53 to 73 (FLKYFGTFFGLAAISLTAGAI). Residues 74-78 (KKKKP) lie on the Cytoplasmic side of the membrane. Residues 79–99 (AFLVPIVPLSFILTYQYDLGY) traverse the membrane as a helical segment. The Extracellular segment spans residues 100–147 (GTLLERMKGEAEDILETEKSKLQLPRGMITFESIEKARKEQSRFFIDK).

In terms of assembly, interacts with PLAT and PLAUR. Expressed in peripheral blood cells and monocytes. Expressed in adrenal medulla.

It localises to the cell membrane. In terms of biological role, receptor for plasminogen. Regulates urokinase plasminogen activator-dependent and stimulates tissue-type plasminogen activator-dependent cell surface plasminogen activation. Proposed to be part of a local catecholaminergic cell plasminogen activation system that regulates neuroendocrine prohormone processing. Involved in regulation of inflammatory response; regulates monocyte chemotactic migration and matrix metalloproteinase activation, such as of MMP2 and MMP9. The protein is Plasminogen receptor (KT) (PLGRKT) of Homo sapiens (Human).